Consider the following 483-residue polypeptide: Betaine aldehyde dehydrogenase (483 aa).

K(+) contacts are provided by Ile27 and Asp93. 149–151 (GAW) provides a ligand contact to NAD(+). Lys161 serves as the catalytic Charge relay system. 175 to 178 (KPSE) serves as a coordination point for NAD(+). Position 179 (Val179) interacts with K(+). An NAD(+)-binding site is contributed by 228–231 (SVPT). Val243 contacts K(+). Residue Glu249 is the Proton acceptor of the active site. NAD(+)-binding residues include Gly251, Cys283, and Glu380. Cys283 (nucleophile) is an active-site residue. Cys283 is subject to Cysteine sulfenic acid (-SOH). K(+)-binding residues include Lys450 and Gly453. The Charge relay system role is filled by Glu457.

This sequence belongs to the aldehyde dehydrogenase family. As to quaternary structure, dimer of dimers. Requires K(+) as cofactor.

It carries out the reaction betaine aldehyde + NAD(+) + H2O = glycine betaine + NADH + 2 H(+). Its pathway is amine and polyamine biosynthesis; betaine biosynthesis via choline pathway; betaine from betaine aldehyde: step 1/1. In terms of biological role, involved in the biosynthesis of the osmoprotectant glycine betaine. Catalyzes the irreversible oxidation of betaine aldehyde to the corresponding acid. The sequence is that of Betaine aldehyde dehydrogenase from Cereibacter sphaeroides (strain ATCC 17029 / ATH 2.4.9) (Rhodobacter sphaeroides).